We begin with the raw amino-acid sequence, 297 residues long: SH2 domain-containing protein 6 (297 aa).

Disordered regions lie at residues 1–61 and 74–93; these read MSCP…FPTR and MNPQ…RGTS. Over residues 36–45 the composition is skewed to pro residues; that stretch reads PSKPPLPPPQ. Residues 187 to 295 form the SH2 domain; sequence WYSGNCDRQS…RGLTYLRFPT (109 aa).

The chain is SH2 domain-containing protein 6 (Sh2d6) from Mus musculus (Mouse).